The following is a 221-amino-acid chain: UPF0758 protein PC1_4100 (221 aa).

The MPN domain occupies 99–221 (AMLNPQATGQ…YVSFAERGWI (123 aa)). Zn(2+) contacts are provided by His170, His172, and Asp183. The JAMM motif signature appears at 170-183 (HNHPSGKAEPSQAD).

The protein belongs to the UPF0758 family. YicR subfamily.

This is UPF0758 protein PC1_4100 from Pectobacterium carotovorum subsp. carotovorum (strain PC1).